A 28-amino-acid polypeptide reads, in one-letter code: Phospholipase A2 2 (28 aa).

This sequence belongs to the phospholipase A2 family. Group I subfamily. Ca(2+) is required as a cofactor. As to expression, expressed by the venom gland.

It localises to the secreted. It carries out the reaction a 1,2-diacyl-sn-glycero-3-phosphocholine + H2O = a 1-acyl-sn-glycero-3-phosphocholine + a fatty acid + H(+). Snake venom phospholipase A2 (PLA2) that inhibits neuromuscular transmission by blocking acetylcholine release from the nerve termini. PLA2 catalyzes the calcium-dependent hydrolysis of the 2-acyl groups in 3-sn-phosphoglycerides. This is Phospholipase A2 2 from Micrurus nigrocinctus (Central American coral snake).